The primary structure comprises 673 residues: uncharacterized protein (673 aa).

Residues 1–95 are disordered; it reads MLNGEKSALG…QSSAIADSIG (95 aa). Residues 13–40 are compositionally biased toward low complexity; sequence PSNSNSSSKLNAKSPNFIPSSSNIPRSS. Over residues 42-60 the composition is skewed to basic and acidic residues; that stretch reads KTKEHSADRKPHRNSEKKT. Residues 214-273 form an RING-type zinc finger; that stretch reads CPFCLEEKPVAARMSRCGHVYCFSCLLRFVETPTAAEVKAAETSGTKIVKCGHRSCPICW. Residues 649-673 are disordered; that stretch reads SAPSKNSKNKKKKKLVLLSTGAAHR.

It localises to the cytoplasm. Its subcellular location is the nucleus. This is an uncharacterized protein from Schizosaccharomyces pombe (strain 972 / ATCC 24843) (Fission yeast).